The primary structure comprises 118 residues: Large ribosomal subunit protein uL18 (118 aa).

The tract at residues 1 to 22 is disordered; the sequence is MISKPDKNKLRQKRHRRVRGKL. Positions 10–20 are enriched in basic residues; that stretch reads LRQKRHRRVRG.

Belongs to the universal ribosomal protein uL18 family. As to quaternary structure, part of the 50S ribosomal subunit; part of the 5S rRNA/L5/L18/L25 subcomplex. Contacts the 5S and 23S rRNAs.

Its function is as follows. This is one of the proteins that bind and probably mediate the attachment of the 5S RNA into the large ribosomal subunit, where it forms part of the central protuberance. The polypeptide is Large ribosomal subunit protein uL18 (Streptococcus thermophilus (strain ATCC BAA-491 / LMD-9)).